The following is a 283-amino-acid chain: (+)-O-methylkolavelool synthase (283 aa).

S-adenosyl-L-methionine-binding positions include glutamine 106, 129–130 (NA), and histidine 151.

This sequence belongs to the methyltransferase superfamily.

The catalysed reaction is (+)-kolavelool + S-adenosyl-L-methionine = (+)-O-methylkolavelool + S-adenosyl-L-homocysteine + H(+). Functionally, involved in the biosynthesis of the diterpene (+)-O-methylkolavelool. Catalyzes the transfer of a methyl group from S-adenosyl-L-methionine to the hydroxy group of (+)-kolavelool, forming (+)-O-methylkolavelool. This Herpetosiphon aurantiacus (strain ATCC 23779 / DSM 785 / 114-95) protein is (+)-O-methylkolavelool synthase.